The following is a 349-amino-acid chain: Heat-inducible transcription repressor HrcA (349 aa).

The protein belongs to the HrcA family.

Its function is as follows. Negative regulator of class I heat shock genes (grpE-dnaK-dnaJ and groELS operons). Prevents heat-shock induction of these operons. The chain is Heat-inducible transcription repressor HrcA from Mycoplasmoides gallisepticum (strain R(low / passage 15 / clone 2)) (Mycoplasma gallisepticum).